The chain runs to 318 residues: Pantothenate kinase (318 aa).

96 to 103 provides a ligand contact to ATP; sequence GSVSVGKS.

This sequence belongs to the prokaryotic pantothenate kinase family.

It localises to the cytoplasm. The enzyme catalyses (R)-pantothenate + ATP = (R)-4'-phosphopantothenate + ADP + H(+). The protein operates within cofactor biosynthesis; coenzyme A biosynthesis; CoA from (R)-pantothenate: step 1/5. This is Pantothenate kinase from Bradyrhizobium sp. (strain ORS 278).